Consider the following 288-residue polypeptide: Bifunctional protein MdtA (288 aa).

NADP(+) is bound by residues 129–132 (TGPV), 152–156 (RKLDK), 195–198 (TAGA), and Lys-256.

In terms of assembly, homotrimer.

It is found in the cytoplasm. It carries out the reaction 5,10-methylenetetrahydromethanopterin + NADP(+) = 5,10-methenyl-5,6,7,8-tetrahydromethanopterin + NADPH. It catalyses the reaction (6R)-5,10-methylene-5,6,7,8-tetrahydrofolate + NADP(+) = (6R)-5,10-methenyltetrahydrofolate + NADPH. It participates in one-carbon metabolism; formaldehyde degradation; formate from formaldehyde (H(4)MPT route): step 2/5. Its function is as follows. Catalyzes the dehydrogenation of methylene-H(4)MPT. Can also catalyze the reversible dehydrogenation of methylene-H(4)F with 20-fold lower catalytic efficiency. The protein is Bifunctional protein MdtA of Methylorubrum extorquens (strain ATCC 14718 / DSM 1338 / JCM 2805 / NCIMB 9133 / AM1) (Methylobacterium extorquens).